We begin with the raw amino-acid sequence, 382 residues long: Polyadenylate-binding protein 5 (382 aa).

RRM domains lie at Ala-18–Pro-96, Gly-106–Phe-182, Thr-199–Lys-276, and Val-302–Ala-378.

The protein resides in the cytoplasm. Functionally, binds the poly(A) tail of mRNA. May be involved in cytoplasmic regulatory processes of mRNA metabolism. Can probably bind to cytoplasmic RNA sequences other than poly(A) in vivo. This is Polyadenylate-binding protein 5 (PABPC5) from Macaca mulatta (Rhesus macaque).